A 137-amino-acid chain; its full sequence is MFQKLLLSVFIILLMDVGERVLTFNLLRHCNLCSHYDGFKCRNGMKSCWKFDLWTQNRTCTTENYYYYDRFTGLYLFRYAKLNCKPCAPGMYQMFHDLLRETFCCIDRNYCNDGTANLDTSSILIEDMNQKKELNDD.

Positions 1-20 (MFQKLLLSVFIILLMDVGER) are cleaved as a signal peptide. The UPAR/Ly6 domain occupies 28–114 (RHCNLCSHYD…CIDRNYCNDG (87 aa)). 5 disulfides stabilise this stretch: Cys-30–Cys-60, Cys-33–Cys-41, Cys-48–Cys-84, Cys-87–Cys-104, and Cys-105–Cys-111. N-linked (GlcNAc...) asparagine glycosylation occurs at Asn-57.

This sequence belongs to the PATE family. Strongly expressed in the epididymis, including the initial segment, caput, corpus and cauda regions. Weakly expressed in prostate.

It is found in the secreted. In Mus musculus (Mouse), this protein is Prostate and testis expressed protein 13.